A 194-amino-acid chain; its full sequence is Transcriptional repressor NrdR (194 aa).

A zinc finger spans residues 3–33 (CPFCGHADDRVLDTRVQKDGSIRRRRECLEC). One can recognise an ATP-cone domain in the interval 48–138 (PFIIKKDGRR…VYRTFKDVQE (91 aa)). Residues 168 to 179 (ESEKSTNHETDS) are compositionally biased toward basic and acidic residues. A disordered region spans residues 168–194 (ESEKSTNHETDSKTPSPRTRPPGPLSN). Over residues 185–194 (RTRPPGPLSN) the composition is skewed to pro residues.

Belongs to the NrdR family. Zn(2+) is required as a cofactor.

Functionally, negatively regulates transcription of bacterial ribonucleotide reductase nrd genes and operons by binding to NrdR-boxes. The chain is Transcriptional repressor NrdR from Bdellovibrio bacteriovorus (strain ATCC 15356 / DSM 50701 / NCIMB 9529 / HD100).